The following is an 88-amino-acid chain: Large ribosomal subunit protein bL27 (88 aa).

Residues 1–22 are disordered; the sequence is MAQKKAGGSSRNGRDSAGRRLG.

This sequence belongs to the bacterial ribosomal protein bL27 family.

The protein is Large ribosomal subunit protein bL27 of Gluconobacter oxydans (strain 621H) (Gluconobacter suboxydans).